A 248-amino-acid polypeptide reads, in one-letter code: Probable transcriptional regulatory protein Psyr_1407 (248 aa).

Belongs to the TACO1 family.

The protein localises to the cytoplasm. This chain is Probable transcriptional regulatory protein Psyr_1407, found in Pseudomonas syringae pv. syringae (strain B728a).